The primary structure comprises 1371 residues: Perilipin-4 (1371 aa).

Residues 1–13 show a composition bias toward basic and acidic residues; the sequence is MSAPDEGRRDPPK. Residues 1–22 are disordered; that stretch reads MSAPDEGRRDPPKPKGKTLGSF. Phosphoserine occurs at positions 25 and 31. The segment at 37 to 86 is disordered; the sequence is ANAHSSARARPAADPTGAPAAEAAQPQAQVAAHPEQTAPWTEKELQPSEK. The segment covering 44 to 72 has biased composition (low complexity); it reads RARPAADPTGAPAAEAAQPQAQVAAHPEQ. 27 tandem repeats follow at residues 109–141, 142–174, 175–207, 208–240, 241–273, 274–306, 307–339, 340–372, 373–405, 406–438, 439–471, 472–504, 505–537, 538–570, 571–603, 604–636, 637–669, 670–702, 703–735, 736–768, 769–801, 802–834, 835–867, 868–900, 901–933, 934–966, and 967–999. The segment at 109–999 is 27 X 33 AA approximate tandem repeat; the sequence is GVASVVDVAK…LMGTKDTVFS (891 aa). A compositionally biased stretch (polar residues) spans 1060–1083; it reads PATSWGGLTSSRTTDNGGEQTALS. Disordered regions lie at residues 1060 to 1093 and 1240 to 1260; these read PATS…SGIS and QAPE…EDAA.

It belongs to the perilipin family.

Its subcellular location is the cell membrane. The protein localises to the cytoplasm. It is found in the lipid droplet. Functionally, may play a role in triacylglycerol packaging into adipocytes. May function as a coat protein involved in the biogenesis of lipid droplets. This is Perilipin-4 from Homo sapiens (Human).